The sequence spans 377 residues: tRNA-specific 2-thiouridylase MnmA (377 aa).

Residues 17 to 24 (GMSGGVDS) and Met-43 each bind ATP. Residues 103–105 (NPD) form an interaction with target base in tRNA region. Cys-108 serves as the catalytic Nucleophile. Cys-108 and Cys-204 form a disulfide bridge. Gly-132 lines the ATP pocket. The tract at residues 154-156 (KDQ) is interaction with tRNA. The active-site Cysteine persulfide intermediate is Cys-204. Positions 316 to 317 (RY) are interaction with tRNA.

The protein belongs to the MnmA/TRMU family.

The protein localises to the cytoplasm. The enzyme catalyses S-sulfanyl-L-cysteinyl-[protein] + uridine(34) in tRNA + AH2 + ATP = 2-thiouridine(34) in tRNA + L-cysteinyl-[protein] + A + AMP + diphosphate + H(+). Functionally, catalyzes the 2-thiolation of uridine at the wobble position (U34) of tRNA, leading to the formation of s(2)U34. The polypeptide is tRNA-specific 2-thiouridylase MnmA (Pseudomonas fluorescens (strain ATCC BAA-477 / NRRL B-23932 / Pf-5)).